Reading from the N-terminus, the 194-residue chain is Leucyl/phenylalanyl-tRNA--protein transferase (194 aa).

Belongs to the L/F-transferase family.

Its subcellular location is the cytoplasm. It carries out the reaction N-terminal L-lysyl-[protein] + L-leucyl-tRNA(Leu) = N-terminal L-leucyl-L-lysyl-[protein] + tRNA(Leu) + H(+). The enzyme catalyses N-terminal L-arginyl-[protein] + L-leucyl-tRNA(Leu) = N-terminal L-leucyl-L-arginyl-[protein] + tRNA(Leu) + H(+). It catalyses the reaction L-phenylalanyl-tRNA(Phe) + an N-terminal L-alpha-aminoacyl-[protein] = an N-terminal L-phenylalanyl-L-alpha-aminoacyl-[protein] + tRNA(Phe). Functions in the N-end rule pathway of protein degradation where it conjugates Leu, Phe and, less efficiently, Met from aminoacyl-tRNAs to the N-termini of proteins containing an N-terminal arginine or lysine. This chain is Leucyl/phenylalanyl-tRNA--protein transferase, found in Chlorobium limicola (strain DSM 245 / NBRC 103803 / 6330).